The chain runs to 100 residues: Co-chaperonin GroES (100 aa).

Belongs to the GroES chaperonin family. As to quaternary structure, heptamer of 7 subunits arranged in a ring. Interacts with the chaperonin GroEL.

It is found in the cytoplasm. Functionally, together with the chaperonin GroEL, plays an essential role in assisting protein folding. The GroEL-GroES system forms a nano-cage that allows encapsulation of the non-native substrate proteins and provides a physical environment optimized to promote and accelerate protein folding. GroES binds to the apical surface of the GroEL ring, thereby capping the opening of the GroEL channel. This chain is Co-chaperonin GroES, found in Mycolicibacterium vanbaalenii (strain DSM 7251 / JCM 13017 / BCRC 16820 / KCTC 9966 / NRRL B-24157 / PYR-1) (Mycobacterium vanbaalenii).